Consider the following 542-residue polypeptide: Carbamoyl phosphate synthase large chain, C-terminal section (542 aa).

The carbamoyl phosphate synthetic domain stretch occupies residues 1–389 (MSDKVLVIGA…WKAQLAAGHE (389 aa)). Residues 122–316 (SKLLKKLGIP…LAKIGTKAIL (195 aa)) form the ATP-grasp domain. ATP contacts are provided by Arg158, Arg197, Ile199, Glu204, Gly230, Val231, His232, Ser233, Gln273, and Glu287. The Mg(2+) site is built by Gln273, Glu287, and Asn289. 3 residues coordinate Mn(2+): Gln273, Glu287, and Asn289. An MGS-like domain is found at 388 to 542 (HELPLEGTAV…KPEELTRYGG (155 aa)). The segment at 390–542 (LPLEGTAVIS…KPEELTRYGG (153 aa)) is allosteric domain.

Belongs to the CarB family. In terms of assembly, composed of two chains; the small (or glutamine) chain promotes the hydrolysis of glutamine to ammonia, which is used by the large (or ammonia) chain to synthesize carbamoyl phosphate. Tetramer of heterodimers (alpha,beta)4. Mg(2+) is required as a cofactor. It depends on Mn(2+) as a cofactor.

It carries out the reaction hydrogencarbonate + L-glutamine + 2 ATP + H2O = carbamoyl phosphate + L-glutamate + 2 ADP + phosphate + 2 H(+). The enzyme catalyses hydrogencarbonate + NH4(+) + 2 ATP = carbamoyl phosphate + 2 ADP + phosphate + 2 H(+). The protein operates within amino-acid biosynthesis; L-arginine biosynthesis; carbamoyl phosphate from bicarbonate: step 1/1. It participates in pyrimidine metabolism; UMP biosynthesis via de novo pathway; (S)-dihydroorotate from bicarbonate: step 1/3. Large subunit of the glutamine-dependent carbamoyl phosphate synthetase (CPSase). CPSase catalyzes the formation of carbamoyl phosphate from the ammonia moiety of glutamine, carbonate, and phosphate donated by ATP, constituting the first step of 2 biosynthetic pathways, one leading to arginine and/or urea and the other to pyrimidine nucleotides. The large subunit (synthetase) binds the substrates ammonia (free or transferred from glutamine from the small subunit), hydrogencarbonate and ATP and carries out an ATP-coupled ligase reaction, activating hydrogencarbonate by forming carboxy phosphate which reacts with ammonia to form carbamoyl phosphate. This chain is Carbamoyl phosphate synthase large chain, C-terminal section (carB2), found in Methanopyrus kandleri (strain AV19 / DSM 6324 / JCM 9639 / NBRC 100938).